The following is a 144-amino-acid chain: Bacilliredoxin BC_2157 (144 aa).

It belongs to the bacilliredoxin family.

The protein is Bacilliredoxin BC_2157 of Bacillus cereus (strain ATCC 14579 / DSM 31 / CCUG 7414 / JCM 2152 / NBRC 15305 / NCIMB 9373 / NCTC 2599 / NRRL B-3711).